Consider the following 315-residue polypeptide: ATP synthase gamma chain (315 aa).

This sequence belongs to the ATPase gamma chain family. F-type ATPases have 2 components, CF(1) - the catalytic core - and CF(0) - the membrane proton channel. CF(1) has five subunits: alpha(3), beta(3), gamma(1), delta(1), epsilon(1). CF(0) has three main subunits: a, b and c.

It is found in the cellular thylakoid membrane. In terms of biological role, produces ATP from ADP in the presence of a proton gradient across the membrane. The gamma chain is believed to be important in regulating ATPase activity and the flow of protons through the CF(0) complex. In Synechococcus sp. (strain PCC 6716), this protein is ATP synthase gamma chain.